A 186-amino-acid polypeptide reads, in one-letter code: Large ribosomal subunit protein uL6 (186 aa).

This sequence belongs to the universal ribosomal protein uL6 family. In terms of assembly, part of the 50S ribosomal subunit.

Functionally, this protein binds to the 23S rRNA, and is important in its secondary structure. It is located near the subunit interface in the base of the L7/L12 stalk, and near the tRNA binding site of the peptidyltransferase center. In Ignicoccus hospitalis (strain KIN4/I / DSM 18386 / JCM 14125), this protein is Large ribosomal subunit protein uL6.